We begin with the raw amino-acid sequence, 245 residues long: tRNA1(Val) (adenine(37)-N6)-methyltransferase (245 aa).

This sequence belongs to the methyltransferase superfamily. tRNA (adenine-N(6)-)-methyltransferase family.

The protein localises to the cytoplasm. The enzyme catalyses adenosine(37) in tRNA1(Val) + S-adenosyl-L-methionine = N(6)-methyladenosine(37) in tRNA1(Val) + S-adenosyl-L-homocysteine + H(+). Functionally, specifically methylates the adenine in position 37 of tRNA(1)(Val) (anticodon cmo5UAC). The protein is tRNA1(Val) (adenine(37)-N6)-methyltransferase of Salmonella typhi.